We begin with the raw amino-acid sequence, 163 residues long: NADH-quinone oxidoreductase subunit I (163 aa).

4Fe-4S ferredoxin-type domains lie at 54 to 84 and 94 to 123; these read LRRY…IDAE and TRYD…EGPN. [4Fe-4S] cluster is bound by residues C64, C67, C70, C74, C103, C106, C109, and C113.

This sequence belongs to the complex I 23 kDa subunit family. NDH-1 is composed of at least 14 different subunits, Nqo1 to Nqo14. The complex has a L-shaped structure, with the hydrophobic arm (subunits Nqo7, Nqo8, Nqo10 to Nqo14) embedded in the inner membrane and the hydrophilic peripheral arm (subunits Nqo1 to Nqo6, Nqo9) protruding into the bacterial cytoplasm. The hydrophilic domain contains all the redox centers. NADH-quinone oxidoreductase forms a supercomplex with ubiquinol-cytochrome c reductase complex (complex III or cytochrome b-c1 complex) and cytochrome c oxidase (complex IV), which stabilizes the NADH-quinone oxidoreductase complex. The cofactor is [4Fe-4S] cluster.

It localises to the cell inner membrane. It catalyses the reaction a quinone + NADH + 5 H(+)(in) = a quinol + NAD(+) + 4 H(+)(out). Its function is as follows. NDH-1 shuttles electrons from NADH, via FMN and iron-sulfur (Fe-S) centers, to quinones in the respiratory chain. The immediate electron acceptor for the enzyme in this species is believed to be ubiquinone. Couples the redox reaction to proton translocation (for every two electrons transferred, four hydrogen ions are translocated across the cytoplasmic membrane), and thus conserves the redox energy in a proton gradient. This Paracoccus denitrificans (strain Pd 1222) protein is NADH-quinone oxidoreductase subunit I.